A 141-amino-acid polypeptide reads, in one-letter code: Large ribosomal subunit protein uL11 (141 aa).

The protein belongs to the universal ribosomal protein uL11 family. Part of the ribosomal stalk of the 50S ribosomal subunit. Interacts with L10 and the large rRNA to form the base of the stalk. L10 forms an elongated spine to which L12 dimers bind in a sequential fashion forming a multimeric L10(L12)X complex. In terms of processing, one or more lysine residues are methylated.

Forms part of the ribosomal stalk which helps the ribosome interact with GTP-bound translation factors. In Chlamydia muridarum (strain MoPn / Nigg), this protein is Large ribosomal subunit protein uL11.